The primary structure comprises 340 residues: MKILGIDTSCDDTSAAIVEDGKNVLSSVLSSSIDAHKEFQGVVPEIAARKHLEAILYVIDKALKDANTTLDDIDLFAVTNRPGLLGSLLVGVASAKSLAFSLNKPLLALDHIAAHIYSPHLTNDIEFPYIALVVSGGHTIITEVHDYGEYKVVGTTLDDAVGEAYDKVSKFLNLGYPGGPIIDRLAKEGNKEAIKYPIVLLNGIDEFNFSYSGLKTACVYSTKKYLKEGYEATNENIAAAFQISAIEPLYIKTLKYAEKSGIKRVTLSGGVACNSYLRDRFGNSKDFECYLPALKYTTDNAAMVAGLAYHMKDKQNFADYNLDCFSRVLNKKYNKNKSAK.

The Fe cation site is built by histidine 111 and histidine 115. Substrate is bound by residues 133–137, aspartate 166, glycine 179, aspartate 183, and asparagine 274; that span reads VVSGG. Aspartate 299 contributes to the Fe cation binding site.

Belongs to the KAE1 / TsaD family. Requires Fe(2+) as cofactor.

The protein resides in the cytoplasm. The enzyme catalyses L-threonylcarbamoyladenylate + adenosine(37) in tRNA = N(6)-L-threonylcarbamoyladenosine(37) in tRNA + AMP + H(+). Required for the formation of a threonylcarbamoyl group on adenosine at position 37 (t(6)A37) in tRNAs that read codons beginning with adenine. Is involved in the transfer of the threonylcarbamoyl moiety of threonylcarbamoyl-AMP (TC-AMP) to the N6 group of A37, together with TsaE and TsaB. TsaD likely plays a direct catalytic role in this reaction. This is tRNA N6-adenosine threonylcarbamoyltransferase from Brachyspira hyodysenteriae (strain ATCC 49526 / WA1).